The chain runs to 572 residues: Putative carbohydrate transport ATP-binding protein MPN_258 (572 aa).

ABC transporter domains follow at residues 6 to 253 (FRME…MGKE) and 327 to 572 (RFIR…LIMQ). 40 to 47 (GENGAGKS) provides a ligand contact to ATP.

This sequence belongs to the ABC transporter superfamily.

The protein resides in the cell membrane. Part of the ABC transporter complex involved in carbohydrates import. Probably responsible for energy coupling to the transport system. The polypeptide is Putative carbohydrate transport ATP-binding protein MPN_258 (Mycoplasma pneumoniae (strain ATCC 29342 / M129 / Subtype 1) (Mycoplasmoides pneumoniae)).